Reading from the N-terminus, the 650-residue chain is Chaperone protein DnaK (650 aa).

Residue T200 is modified to Phosphothreonine; by autocatalysis. Residues 611–636 (AQQAGAAGAAGAAAEGASAQGGAQPA) show a composition bias toward low complexity. Positions 611–650 (AQQAGAAGAAGAAAEGASAQGGAQPADDVVDADFKEVKKD) are disordered.

It belongs to the heat shock protein 70 family.

Its function is as follows. Acts as a chaperone. The sequence is that of Chaperone protein DnaK from Burkholderia mallei (strain NCTC 10247).